Reading from the N-terminus, the 125-residue chain is Protein ApaG (125 aa).

The 123-residue stretch at 3–125 folds into the ApaG domain; sequence TAVTEGIEVT…FPLVVPGSLN (123 aa).

The chain is Protein ApaG from Anaeromyxobacter dehalogenans (strain 2CP-C).